Consider the following 179-residue polypeptide: Protein GrpE (179 aa).

It belongs to the GrpE family. In terms of assembly, homodimer.

It is found in the cytoplasm. Participates actively in the response to hyperosmotic and heat shock by preventing the aggregation of stress-denatured proteins, in association with DnaK and GrpE. It is the nucleotide exchange factor for DnaK and may function as a thermosensor. Unfolded proteins bind initially to DnaJ; upon interaction with the DnaJ-bound protein, DnaK hydrolyzes its bound ATP, resulting in the formation of a stable complex. GrpE releases ADP from DnaK; ATP binding to DnaK triggers the release of the substrate protein, thus completing the reaction cycle. Several rounds of ATP-dependent interactions between DnaJ, DnaK and GrpE are required for fully efficient folding. This chain is Protein GrpE, found in Rickettsia felis (strain ATCC VR-1525 / URRWXCal2) (Rickettsia azadi).